The chain runs to 507 residues: MITVKGPVDHVVVVGAGLAGLAAALHLLGAGRRVTVVEREDVPGGRAGLLESGGFRIDTGPTVLTMPDLVEDAFAAVGERMADRLELIRLAPAYRARFADGSQLDVHTDGAAMEAAVEEFAGARQAVGYRRLRIWLERLYRVQMRRFIDTNFDSPLQLAHPDLARLAALGGFGRLDARIGHFVSDERLRRVFSFQALYAGVPPARALAAYAVIAYMDTVAGVYFPRGGMHALPRAMADAASDAGAVLRYGQRVTRLERSGDRVTAVVTDQEHIPCDAVVLTPDLPVSYRLLGRTPHRPLPLRHSPSAVILHTGTDRTWPDLAHHTISFGAAWKNTFHELTRTGRLMSDPSLLITRPTATDPSLAPPGKHLHYVLAPCPNTEVGPGVREWRELGPRYRDELLAELERREMPGLGAAIEEEGLVTPVDWTAQGHAAGTPFSVAHTFPQTGPFRPRNLVRGTVNAVLAGCGTTPGVGVPTVLISGKLAAERITGPRIARAPRSAPGGSSA.

12-45 is a binding site for FAD; sequence VVVGAGLAGLAAALHLLGAGRRVTVVEREDVPGG.

It belongs to the carotenoid/retinoid oxidoreductase family. Requires FAD as cofactor.

It functions in the pathway carotenoid biosynthesis; lycopene biosynthesis. Its function is as follows. This enzyme converts phytoene into zeta-carotene via the intermediary of phytofluene by the symmetrical introduction of two double bonds at the C-11 and C-11' positions of phytoene. This Streptomyces griseus protein is Phytoene dehydrogenase (crtI).